The following is a 252-amino-acid chain: Protein A47 (252 aa).

It belongs to the orthopoxvirus A47 protein family.

This Vaccinia virus (strain Western Reserve) (VACV) protein is Protein A47.